Consider the following 94-residue polypeptide: Large ribosomal subunit protein bL27 (94 aa).

Positions 1-9 are excised as a propeptide; that stretch reads MLRLDLQFF.

This sequence belongs to the bacterial ribosomal protein bL27 family. Post-translationally, the N-terminus is cleaved by ribosomal processing cysteine protease Prp.

This chain is Large ribosomal subunit protein bL27, found in Bacillus pumilus (strain SAFR-032).